Reading from the N-terminus, the 506-residue chain is Anaerobic nitric oxide reductase transcription regulator NorR (506 aa).

Aspartate 57 carries the post-translational modification 4-aspartylphosphate. Residues 187 to 416 (MIGLSPAMTQ…LEHAIHRAVV (230 aa)) form the Sigma-54 factor interaction domain. ATP contacts are provided by residues 215–222 (GETGTGKE) and 278–287 (ADNGTLFLDE). The segment at residues 481 to 500 (WAASARALETDVANLHRLAK) is a DNA-binding region (H-T-H motif).

Its pathway is nitrogen metabolism; nitric oxide reduction. Functionally, required for the expression of anaerobic nitric oxide (NO) reductase, acts as a transcriptional activator for at least the norVW operon. Activation also requires sigma-54. This Salmonella paratyphi A (strain ATCC 9150 / SARB42) protein is Anaerobic nitric oxide reductase transcription regulator NorR.